The chain runs to 590 residues: Complement component C8 beta chain (590 aa).

Positions 1 to 32 are cleaved as a signal peptide; it reads MKKSWTWTWRVPAELLLLCAALGCLCVPGSRS. The propeptide occupies 33 to 54; the sequence is ERPRSLEPTVVNRSLAKSRHSR. An N-linked (GlcNAc...) asparagine glycan is attached at asparagine 44. The region spanning 64–117 is the TSP type-1 1 domain; it reads DCELSSWSSWTMCDPCQKKRYRHAYLLRPSQFNGEPCNFSDKEVEDCATSRPCR. Intrachain disulfides connect cysteine 65/cysteine 100, cysteine 76/cysteine 110, cysteine 79/cysteine 116, cysteine 122/cysteine 133, cysteine 127/cysteine 146, cysteine 140/cysteine 155, and cysteine 162/cysteine 200. C-linked (Man) tryptophan glycans are attached at residues tryptophan 70 and tryptophan 73. A glycan (N-linked (GlcNAc...) asparagine) is linked at asparagine 101. Positions 120–157 constitute an LDL-receptor class A domain; sequence VRCEGFVCAQTGRCVNRRLLCNGDNDCGDQSDEANCRK. Ca(2+) contacts are provided by leucine 138, asparagine 141, aspartate 143, aspartate 145, aspartate 151, and glutamate 152. Residues 158 to 504 enclose the MACPF domain; it reads IYKKCHHEME…EFQGEVSPCR (347 aa). The next 4 beta stranded transmembrane spans lie at 252 to 259, 262 to 269, 379 to 386, and 392 to 399; these read STFNLGFK, SIFEFGIN, AKNDFKLG, and VYVSLGVS. A disulfide bridge connects residues cysteine 378 and cysteine 403. Threonine 418 carries the phosphothreonine modification. 4 disulfides stabilise this stretch: cysteine 503/cysteine 550, cysteine 505/cysteine 521, cysteine 508/cysteine 523, and cysteine 525/cysteine 534. The 31-residue stretch at 505 to 535 folds into the EGF-like domain; sequence CAPCQGNGVPVQKGSRCDCICPVGFQGSACE. Positions 545 to 588 constitute a TSP type-1 2 domain; the sequence is DGRWSCWSRWSSCSGGQKTRRRQCNNPAPQDGGSPCSGPASETL. Residues tryptophan 551 and tryptophan 554 are each glycosylated (C-linked (Man) tryptophan). Cysteine 557 and cysteine 590 are disulfide-bonded. Residues 557-590 are disordered; the sequence is CSGGQKTRRRQCNNPAPQDGGSPCSGPASETLAC.

It belongs to the complement C6/C7/C8/C9 family. As to quaternary structure, heterotrimer of 3 chains: alpha (C8A), beta (C8B) and gamma (C8G); the alpha and gamma chains are disulfide bonded. Component of the membrane attack complex (MAC), composed of complement C5b, C6, C7, C8A, C8B, C8G and multiple copies of the pore-forming subunit C9. N-glycosylated; contains one or two bound glycans. Not O-glycosylated.

It is found in the secreted. The protein resides in the target cell membrane. Membrane attack complex (MAC) assembly is inhibited by CD59, thereby protecting self-cells from damage during complement activation. CD59 acts by binding to the beta-haipins of C8 (C8A and C8B), forming an intermolecular beta-sheet that prevents incorporation of the multiple copies of C9 required for complete formation of the osmolytic pore. MAC assembly is also inhibited by clusterin (CLU) chaperones that inhibit polymerization of C9. Component of the membrane attack complex (MAC), a multiprotein complex activated by the complement cascade, which inserts into a target cell membrane and forms a pore, leading to target cell membrane rupture and cell lysis. The MAC is initiated by proteolytic cleavage of C5 into complement C5b in response to the classical, alternative, lectin and GZMK complement pathways. The complement pathways consist in a cascade of proteins that leads to phagocytosis and breakdown of pathogens and signaling that strengthens the adaptive immune system. C8B, together with C8A and C8G, inserts into the target membrane, but does not form pores by itself. During MAC assembly, associates with C5b, C6 and C7 to form the C5b8 intermediate complex that inserts into the target membrane and traverses the bilayer increasing membrane rigidity. The chain is Complement component C8 beta chain (C8B) from Oryctolagus cuniculus (Rabbit).